A 237-amino-acid chain; its full sequence is Orotidine 5'-phosphate decarboxylase (237 aa).

Substrate is bound by residues Asp11, Lys34, 61–70 (DLKLHDIPNT), Thr123, Arg185, Gln194, Gly214, and Arg215. The active-site Proton donor is the Lys63.

Belongs to the OMP decarboxylase family. Type 1 subfamily. As to quaternary structure, homodimer.

The enzyme catalyses orotidine 5'-phosphate + H(+) = UMP + CO2. It functions in the pathway pyrimidine metabolism; UMP biosynthesis via de novo pathway; UMP from orotate: step 2/2. Functionally, catalyzes the decarboxylation of orotidine 5'-monophosphate (OMP) to uridine 5'-monophosphate (UMP). This Ligilactobacillus salivarius (strain UCC118) (Lactobacillus salivarius) protein is Orotidine 5'-phosphate decarboxylase.